We begin with the raw amino-acid sequence, 1849 residues long: Mitogen-activated protein kinase kinase kinase mkh1 (1849 aa).

One can recognise a Protein kinase domain in the interval 1556-1825; that stretch reads WFKGQLIGKG…TKLLAEHPFC (270 aa). ATP-binding positions include 1562–1570 and Lys-1585; that span reads IGKGTYGRV. The active-site Proton acceptor is Asp-1686.

Belongs to the protein kinase superfamily. STE Ser/Thr protein kinase family. MAP kinase kinase kinase subfamily.

It carries out the reaction L-seryl-[protein] + ATP = O-phospho-L-seryl-[protein] + ADP + H(+). It catalyses the reaction L-threonyl-[protein] + ATP = O-phospho-L-threonyl-[protein] + ADP + H(+). Mitogen-activated protein kinase kinase kinase, part of the mkh1-mkk1-spm1 MAPK cascade that regulates vegetative growth, conidial formation, colony surface hydrophobicity, osmotic stress, cell wall integrity maintenance, carbon and nitrogen source utilization, chitin distribution, septa formation, and pathogenicity. The sequence is that of Mitogen-activated protein kinase kinase kinase mkh1 from Cytospora mali (Apple Valsa canker fungus).